The following is a 60-amino-acid chain: Large ribosomal subunit protein bL32 (60 aa).

Positions 1–16 (MAVPRRKTSPSRRGMR) are enriched in basic residues. The disordered stretch occupies residues 1–60 (MAVPRRKTSPSRRGMRRSADAIKKPTYVEDKDSGELRRPHHLDLKTGMYKGRQVLKKKES). Residues 17–44 (RSADAIKKPTYVEDKDSGELRRPHHLDL) are compositionally biased toward basic and acidic residues.

Belongs to the bacterial ribosomal protein bL32 family.

This Bradyrhizobium diazoefficiens (strain JCM 10833 / BCRC 13528 / IAM 13628 / NBRC 14792 / USDA 110) protein is Large ribosomal subunit protein bL32.